Here is a 426-residue protein sequence, read N- to C-terminus: Citrate transporter (426 aa).

Transmembrane regions (helical) follow at residues 1–21 (MLAILGFVMMIVFMYLIMSNR), 22–42 (LSALIALIVVPIVFALISGFG), 59–79 (TGIMLLFAILYFGIMIDSGLF), 86–106 (ILSFVKGDPLKIAVGTAVLTM), 137–157 (LVLAGIAMLGSGVMNIIPWGG), 176–196 (PLIPAMIAGILWVIAVAYILG), 232–252 (LLTVALMAALITSLLPLPVLF), 278–298 (AGNALNVVSMVFAAGIFTGIL), 318–338 (AMGPHLPLITAIVSMPFTFFM), 343–363 (FYFGVLPIIAEAASAYGIDAA), 377–397 (LLSPLVPSTYLLVGMAGVSFG), and 406–426 (WAVGTTIVMTIAALLIGIISF).

Belongs to the CitM (TC 2.A.11) transporter family.

Its subcellular location is the cell membrane. Transports the free citrate anion. Probably cotransports citrate and at least three or four protons. The citrate uptake is inhibited by the presence of magnesium ions. The protein is Citrate transporter (citN) of Bacillus subtilis (strain 168).